A 282-amino-acid polypeptide reads, in one-letter code: 2-dehydro-3-deoxyphosphooctonate aldolase (282 aa).

It belongs to the KdsA family.

Its subcellular location is the cytoplasm. It carries out the reaction D-arabinose 5-phosphate + phosphoenolpyruvate + H2O = 3-deoxy-alpha-D-manno-2-octulosonate-8-phosphate + phosphate. It functions in the pathway carbohydrate biosynthesis; 3-deoxy-D-manno-octulosonate biosynthesis; 3-deoxy-D-manno-octulosonate from D-ribulose 5-phosphate: step 2/3. It participates in bacterial outer membrane biogenesis; lipopolysaccharide biosynthesis. The chain is 2-dehydro-3-deoxyphosphooctonate aldolase from Shewanella baltica (strain OS185).